The following is a 398-amino-acid chain: Bifunctional enzyme IspD/IspF (398 aa).

The segment at 1 to 234 (MPNPPRTAAI…SRLTALLGDI (234 aa)) is 2-C-methyl-D-erythritol 4-phosphate cytidylyltransferase. The interval 235-398 (RTGTGYDVHA…LPWGAEGLAG (164 aa)) is 2-C-methyl-D-erythritol 2,4-cyclodiphosphate synthase. Asp-241 and His-243 together coordinate a divalent metal cation. 4-CDP-2-C-methyl-D-erythritol 2-phosphate contacts are provided by residues 241–243 (DVH) and 267–268 (HS). His-275 provides a ligand contact to a divalent metal cation. 4-CDP-2-C-methyl-D-erythritol 2-phosphate contacts are provided by residues 289–291 (DIG), 365–368 (TTSE), Phe-372, and Arg-375.

In the N-terminal section; belongs to the IspD/TarI cytidylyltransferase family. IspD subfamily. The protein in the C-terminal section; belongs to the IspF family. The cofactor is a divalent metal cation.

The enzyme catalyses 2-C-methyl-D-erythritol 4-phosphate + CTP + H(+) = 4-CDP-2-C-methyl-D-erythritol + diphosphate. It carries out the reaction 4-CDP-2-C-methyl-D-erythritol 2-phosphate = 2-C-methyl-D-erythritol 2,4-cyclic diphosphate + CMP. Its pathway is isoprenoid biosynthesis; isopentenyl diphosphate biosynthesis via DXP pathway; isopentenyl diphosphate from 1-deoxy-D-xylulose 5-phosphate: step 2/6. It functions in the pathway isoprenoid biosynthesis; isopentenyl diphosphate biosynthesis via DXP pathway; isopentenyl diphosphate from 1-deoxy-D-xylulose 5-phosphate: step 4/6. In terms of biological role, bifunctional enzyme that catalyzes the formation of 4-diphosphocytidyl-2-C-methyl-D-erythritol from CTP and 2-C-methyl-D-erythritol 4-phosphate (MEP) (IspD), and catalyzes the conversion of 4-diphosphocytidyl-2-C-methyl-D-erythritol 2-phosphate (CDP-ME2P) to 2-C-methyl-D-erythritol 2,4-cyclodiphosphate (ME-CPP) with a corresponding release of cytidine 5-monophosphate (CMP) (IspF). This chain is Bifunctional enzyme IspD/IspF, found in Rhodopseudomonas palustris (strain BisB5).